Here is a 1180-residue protein sequence, read N- to C-terminus: Phosphatidylinositol 4-kinase (1180 aa).

The region spanning 1-206 (MNKISDTIII…SVYLHSPSTS (206 aa)) is the PIK helical domain. 5 disordered regions span residues 15–84 (NEDE…KHKE), 257–327 (ENDH…ENDN), 355–391 (TSPI…NNIN), 768–799 (TISN…IPHS), and 832–894 (AISP…SPFG). The segment covering 38-74 (NNNNNNILTNVNNNKNNTITSSGGSDSSSSSSNNNNN) has biased composition (low complexity). A compositionally biased stretch (basic residues) spans 75 to 84 (KIKKSKKHKE). The span at 257 to 270 (ENDHHIENDPKKDI) shows a compositional bias: basic and acidic residues. Low complexity-rich tracts occupy residues 271–325 (NSNN…SGEN), 364–391 (NNNN…NNIN), 768–793 (TISN…PTLP), and 835–879 (PPSQ…SPTN). The 270-residue stretch at 895–1164 (ESWQEKIERY…LISYSIDHFK (270 aa)) folds into the PI3K/PI4K catalytic domain. The G-loop stretch occupies residues 901-907 (IERYKKI). Positions 1030–1038 (QIKDRHNGN) are catalytic loop. The segment at 1049–1073 (HIDFGFILSNSPGNISFESAPFKLT) is activation loop.

Belongs to the PI3/PI4-kinase family. Type III PI4K subfamily.

The catalysed reaction is a 1,2-diacyl-sn-glycero-3-phospho-(1D-myo-inositol) + ATP = a 1,2-diacyl-sn-glycero-3-phospho-(1D-myo-inositol 4-phosphate) + ADP + H(+). Functionally, acts on phosphatidylinositol (PtdIns) in the first committed step in the production of the second messenger inositol-1,4,5,-trisphosphate. This chain is Phosphatidylinositol 4-kinase (pikD), found in Dictyostelium discoideum (Social amoeba).